A 67-amino-acid polypeptide reads, in one-letter code: ATP synthase F(0) complex subunit 8 (67 aa).

Residues Thr-8–Leu-24 form a helical membrane-spanning segment. The residue at position 54 (Lys-54) is an N6-acetyllysine; alternate. At Lys-54 the chain carries N6-succinyllysine; alternate. At Lys-57 the chain carries N6-acetyllysine.

The protein belongs to the ATPase protein 8 family. As to quaternary structure, component of the ATP synthase complex composed at least of ATP5F1A/subunit alpha, ATP5F1B/subunit beta, ATP5MC1/subunit c (homooctomer), MT-ATP6/subunit a, MT-ATP8/subunit 8, ATP5ME/subunit e, ATP5MF/subunit f, ATP5MG/subunit g, ATP5MK/subunit k, ATP5MJ/subunit j, ATP5F1C/subunit gamma, ATP5F1D/subunit delta, ATP5F1E/subunit epsilon, ATP5PF/subunit F6, ATP5PB/subunit b, ATP5PD/subunit d, ATP5PO/subunit OSCP. ATP synthase complex consists of a soluble F(1) head domain (subunits alpha(3) and beta(3)) - the catalytic core - and a membrane F(0) domain - the membrane proton channel (subunits c, a, 8, e, f, g, k and j). These two domains are linked by a central stalk (subunits gamma, delta, and epsilon) rotating inside the F1 region and a stationary peripheral stalk (subunits F6, b, d, and OSCP). Interacts with PRICKLE3.

Its subcellular location is the mitochondrion membrane. Its function is as follows. Subunit 8, of the mitochondrial membrane ATP synthase complex (F(1)F(0) ATP synthase or Complex V) that produces ATP from ADP in the presence of a proton gradient across the membrane which is generated by electron transport complexes of the respiratory chain. ATP synthase complex consist of a soluble F(1) head domain - the catalytic core - and a membrane F(1) domain - the membrane proton channel. These two domains are linked by a central stalk rotating inside the F(1) region and a stationary peripheral stalk. During catalysis, ATP synthesis in the catalytic domain of F(1) is coupled via a rotary mechanism of the central stalk subunits to proton translocation. In vivo, can only synthesize ATP although its ATP hydrolase activity can be activated artificially in vitro. Part of the complex F(0) domain. The protein is ATP synthase F(0) complex subunit 8 of Glis glis (Fat dormouse).